The primary structure comprises 99 residues: Integration host factor subunit alpha (99 aa).

This sequence belongs to the bacterial histone-like protein family. As to quaternary structure, heterodimer of an alpha and a beta chain.

In terms of biological role, this protein is one of the two subunits of integration host factor, a specific DNA-binding protein that functions in genetic recombination as well as in transcriptional and translational control. The protein is Integration host factor subunit alpha of Enterobacter sp. (strain 638).